The chain runs to 363 residues: tRNA(Met) cytidine acetate ligase (363 aa).

ATP is bound by residues 7–20 (IAEFNPFHNGHKYL), Gly-96, Asn-152, and Arg-175.

Belongs to the TmcAL family.

It is found in the cytoplasm. It catalyses the reaction cytidine(34) in elongator tRNA(Met) + acetate + ATP = N(4)-acetylcytidine(34) in elongator tRNA(Met) + AMP + diphosphate. Its function is as follows. Catalyzes the formation of N(4)-acetylcytidine (ac(4)C) at the wobble position of elongator tRNA(Met), using acetate and ATP as substrates. First activates an acetate ion to form acetyladenylate (Ac-AMP) and then transfers the acetyl group to tRNA to form ac(4)C34. This chain is tRNA(Met) cytidine acetate ligase, found in Streptococcus gordonii (strain Challis / ATCC 35105 / BCRC 15272 / CH1 / DL1 / V288).